We begin with the raw amino-acid sequence, 323 residues long: RNA polymerase sigma factor SigB (323 aa).

The sufficient to interact with RbpA stretch occupies residues 1-228; the sequence is MADAPTRATT…DMPVGSEEEA (228 aa). The sigma-70 factor domain-1 stretch occupies residues 25 to 59; it reads DLVRVYLNGIGKTALLNAAGEVELAKRIEAGLYAE. The segment at 90–160 is sigma-70 factor domain-2; the sequence is LLEANLRLVV…TRGMADQSRT (71 aa). The Polymerase core binding signature appears at 114 to 117; that stretch reads DLIQ. The interval 169 to 245 is sigma-70 factor domain-3; sequence EQVNKLARIK…DAEAMSAENA (77 aa). The segment at 258–311 is sigma-70 factor domain-4; it reads VLATLDEREHQVIRLRFGLDDGQPRTLDQIGKLFGLSRERVRQIERDVMSKLRH. A DNA-binding region (H-T-H motif) is located at residues 284-303; sequence LDQIGKLFGLSRERVRQIER.

This sequence belongs to the sigma-70 factor family. Monomer. Interacts transiently with the RNA polymerase catalytic core formed by RpoA, RpoB, RpoC and RpoZ (2 alpha, 1 beta, 1 beta' and 1 omega subunit) to form the RNA polymerase holoenzyme that can initiate transcription.

Sigma factors are initiation factors that promote the attachment of RNA polymerase to specific initiation sites and are then released. A non-essential principal sigma factor that responds to cell envelope stress and hypoxia. In Mycobacterium tuberculosis (strain CDC 1551 / Oshkosh), this protein is RNA polymerase sigma factor SigB (sigB).